The primary structure comprises 685 residues: Sodium-dependent phosphate transporter 1-B (685 aa).

6 consecutive transmembrane segments (helical) span residues 21–41, 66–86, 106–126, 162–182, 207–227, and 234–254; these read IMAP…VLAF, ACIL…AKVS, LMAG…AASF, IVLS…LLFF, ACTI…LLGF, and GIIL…WFFV. Residues 489–511 are disordered; it reads EGCIEDVVTDRKSSSSSLEERHD. Positions 496–511 are enriched in basic and acidic residues; sequence VTDRKSSSSSLEERHD. 4 helical membrane-spanning segments follow: residues 517 to 537, 565 to 585, 606 to 626, and 656 to 676; these read VSLL…FAHG, ATPI…LWVW, FSIE…GLPI, and IFLA…GIMA.

It belongs to the inorganic phosphate transporter (PiT) (TC 2.A.20) family.

Its subcellular location is the membrane. Its function is as follows. Sodium-phosphate symporter which plays a fundamental housekeeping role in phosphate transport. The chain is Sodium-dependent phosphate transporter 1-B (slc20a1-b) from Xenopus laevis (African clawed frog).